Here is a 324-residue protein sequence, read N- to C-terminus: Acetyl-coenzyme A carboxylase carboxyl transferase subunit alpha (324 aa).

Residues 37 to 291 (KLERRLDKLK…RDFILREWLR (255 aa)) enclose the CoA carboxyltransferase C-terminal domain.

The protein belongs to the AccA family. As to quaternary structure, acetyl-CoA carboxylase is a heterohexamer composed of biotin carboxyl carrier protein (AccB), biotin carboxylase (AccC) and two subunits each of ACCase subunit alpha (AccA) and ACCase subunit beta (AccD).

It is found in the cytoplasm. It carries out the reaction N(6)-carboxybiotinyl-L-lysyl-[protein] + acetyl-CoA = N(6)-biotinyl-L-lysyl-[protein] + malonyl-CoA. The protein operates within lipid metabolism; malonyl-CoA biosynthesis; malonyl-CoA from acetyl-CoA: step 1/1. Functionally, component of the acetyl coenzyme A carboxylase (ACC) complex. First, biotin carboxylase catalyzes the carboxylation of biotin on its carrier protein (BCCP) and then the CO(2) group is transferred by the carboxyltransferase to acetyl-CoA to form malonyl-CoA. The polypeptide is Acetyl-coenzyme A carboxylase carboxyl transferase subunit alpha (Chlamydia abortus (strain DSM 27085 / S26/3) (Chlamydophila abortus)).